A 989-amino-acid chain; its full sequence is Zinc finger SWIM domain-containing protein 4 (989 aa).

Residues M1–P32 form a disordered region. The segment at Y139–I176 adopts an SWIM-type zinc-finger fold.

In Homo sapiens (Human), this protein is Zinc finger SWIM domain-containing protein 4 (ZSWIM4).